The chain runs to 527 residues: Tyrosine-protein kinase TXK (527 aa).

Residues 58–81 are disordered; the sequence is TQSNRGGVQPSKRKPLPPLPQEPP. The region spanning 82-142 is the SH3 domain; it reads DERIQVKALY…PSNYVTENRL (61 aa). The residue at position 91 (tyrosine 91) is a Phosphotyrosine; by autocatalysis. The SH2 domain occupies 150-246; the sequence is WYHKNITRNQ…GLISRLRYPI (97 aa). The Protein kinase domain occupies 271–527; it reads LAFVKEIGSG…QVLTEIAETW (257 aa). Residues 277 to 285 and lysine 299 each bind ATP; that span reads IGSGQFGVV. Residue aspartate 390 is the Proton acceptor of the active site. Position 420 is a phosphotyrosine; by FYN and autocatalysis (tyrosine 420).

It belongs to the protein kinase superfamily. Tyr protein kinase family. TEC subfamily. In terms of assembly, interacts with PARP1 and EEF1A1. Interacts with SH2D2A. Interacts with FYN. Phosphorylated at Tyr-420 by FYN. Autophosphorylation at Tyr-91 is critical for the activation of TXK, leading to the up-regulation of IFN-gamma gene transcription. Post-translationally, the cysteine string at the N-terminus is palmitoylated and required for the proper subcellular location. In terms of tissue distribution, expressed in early thymocytes, T-cells and mast cells.

It localises to the cytoplasm. The protein resides in the nucleus. The protein localises to the cell membrane. It catalyses the reaction L-tyrosyl-[protein] + ATP = O-phospho-L-tyrosyl-[protein] + ADP + H(+). With respect to regulation, activated by phosphorylation by FYN. Non-receptor tyrosine kinase that plays a redundant role with ITK in regulation of the adaptive immune response. Regulates the development, function and differentiation of conventional T-cells and nonconventional NKT-cells. When antigen presenting cells (APC) activate T-cell receptor (TCR), a series of phosphorylation leads to the recruitment of TXK to the cell membrane, where it is phosphorylated at Tyr-420. Phosphorylation leads to TXK full activation. Also contributes to signaling from many receptors and participates in multiple downstream pathways, including regulation of the actin cytoskeleton. Like ITK, can phosphorylate PLCG1, leading to its localization in lipid rafts and activation, followed by subsequent cleavage of its substrates. In turn, the endoplasmic reticulum releases calcium in the cytoplasm and the nuclear activator of activated T-cells (NFAT) translocates into the nucleus to perform its transcriptional duty. Plays a role in the positive regulation of IFNG transcription in T-helper 1 cells as part of an IFNG promoter-binding complex with PARP1 and EEF1A1. Within the complex, phosphorylates both PARP1 and EEF1A1. Also phosphorylates key sites in LCP2 leading to the up-regulation of Th1 preferred cytokine IL-2. Phosphorylates 'Tyr-201' of CTLA4 which leads to the association of PI-3 kinase with the CTLA4 receptor. The chain is Tyrosine-protein kinase TXK (Txk) from Mus musculus (Mouse).